Consider the following 206-residue polypeptide: MIDPDGYRPNVGIVLMRQDGQVFWARRVRRDGWQFPQGGMNTDETPVEAMYRELQEETGLLPEHVEVLGATPGWLRYKLPARAIRRNERQVCIGQKQVWFLLRLTGDESHVCLDHTDSPEFDHWRWVDFWYPVEHVVMFKRGVYARALRHLAPLAQGVAGQGVTAMPKSAAEAWMPGHTAGHDRPRKRPRSRGYWPKKAQGDVPPT.

The region spanning 6–149 (GYRPNVGIVL…KRGVYARALR (144 aa)) is the Nudix hydrolase domain. The short motif at 38-59 (GGMNTDETPVEAMYRELQEETG) is the Nudix box element. The disordered stretch occupies residues 175 to 206 (MPGHTAGHDRPRKRPRSRGYWPKKAQGDVPPT).

This sequence belongs to the Nudix hydrolase family. RppH subfamily. A divalent metal cation serves as cofactor.

In terms of biological role, accelerates the degradation of transcripts by removing pyrophosphate from the 5'-end of triphosphorylated RNA, leading to a more labile monophosphorylated state that can stimulate subsequent ribonuclease cleavage. The polypeptide is RNA pyrophosphohydrolase (Stenotrophomonas maltophilia (strain R551-3)).